Reading from the N-terminus, the 507-residue chain is Glucose-6-phosphate isomerase (507 aa).

Residue glutamate 337 is the Proton donor of the active site. Residues histidine 368 and lysine 478 contribute to the active site.

It belongs to the GPI family.

The protein localises to the cytoplasm. The enzyme catalyses alpha-D-glucose 6-phosphate = beta-D-fructose 6-phosphate. Its pathway is carbohydrate biosynthesis; gluconeogenesis. The protein operates within carbohydrate degradation; glycolysis; D-glyceraldehyde 3-phosphate and glycerone phosphate from D-glucose: step 2/4. In terms of biological role, catalyzes the reversible isomerization of glucose-6-phosphate to fructose-6-phosphate. This is Glucose-6-phosphate isomerase from Novosphingobium aromaticivorans (strain ATCC 700278 / DSM 12444 / CCUG 56034 / CIP 105152 / NBRC 16084 / F199).